The chain runs to 274 residues: MGTLSVNQNKLQKRLRRLAGEAITDFNMIEDGDKVMVCLSGGKDSYTMLDILLYLQKVAPIRFEIVAVNMDQKQPGFPEHVLPEYLKSIGVEYHIVEKDTYSVVKEKIPEGKTTCSLCSRLRRGTLYTFADEIGATKMALGHHRDDILETFFLNMFYGGTLKAMPPKLLADDGRNVVIRPLAYCSEKDIEAYSQLKEFPIIPCNLCGSQENLQRQVVKEMLLEWERKSPGRTEIMFRALQNVVPSQLADRNLFDFANLRIDENATPRFLDVMNL.

The PP-loop motif signature appears at serine 40 to serine 45. The [4Fe-4S] cluster site is built by cysteine 115, cysteine 118, and cysteine 206.

It belongs to the TtcA family. In terms of assembly, homodimer. It depends on Mg(2+) as a cofactor. [4Fe-4S] cluster is required as a cofactor.

It localises to the cytoplasm. It carries out the reaction cytidine(32) in tRNA + S-sulfanyl-L-cysteinyl-[cysteine desulfurase] + AH2 + ATP = 2-thiocytidine(32) in tRNA + L-cysteinyl-[cysteine desulfurase] + A + AMP + diphosphate + H(+). Its pathway is tRNA modification. Functionally, catalyzes the ATP-dependent 2-thiolation of cytidine in position 32 of tRNA, to form 2-thiocytidine (s(2)C32). The sulfur atoms are provided by the cysteine/cysteine desulfurase (IscS) system. This is tRNA-cytidine(32) 2-sulfurtransferase from Pseudomonas aeruginosa (strain LESB58).